A 215-amino-acid polypeptide reads, in one-letter code: 3-isopropylmalate dehydratase small subunit (215 aa).

Belongs to the LeuD family. LeuD type 1 subfamily. In terms of assembly, heterodimer of LeuC and LeuD.

It carries out the reaction (2R,3S)-3-isopropylmalate = (2S)-2-isopropylmalate. The protein operates within amino-acid biosynthesis; L-leucine biosynthesis; L-leucine from 3-methyl-2-oxobutanoate: step 2/4. In terms of biological role, catalyzes the isomerization between 2-isopropylmalate and 3-isopropylmalate, via the formation of 2-isopropylmaleate. In Marinobacter nauticus (strain ATCC 700491 / DSM 11845 / VT8) (Marinobacter aquaeolei), this protein is 3-isopropylmalate dehydratase small subunit.